Here is a 135-residue protein sequence, read N- to C-terminus: Galectin-1 (135 aa).

Residue Ala-2 is modified to N-acetylalanine. A Galectin domain is found at Gly-4 to Glu-135. Residues Lys-13, Lys-19, and Lys-29 each carry the N6-acetyllysine modification. Residue Ser-30 is modified to Phosphoserine. Residues His-45–Arg-49, His-53, Asn-62, and Trp-69–Glu-72 each bind a beta-D-galactoside. At Lys-128 the chain carries N6-acetyllysine.

As to quaternary structure, homodimer. Binds LGALS3BP. Interacts with CD2, CD3, CD4, CD6, CD7, CD43, ALCAM and CD45. Interacts with laminin (via poly-N-acetyllactosamine). Interacts with SUSD2. Interacts with cargo receptor TMED10; the interaction mediates the translocation from the cytoplasm into the ERGIC (endoplasmic reticulum-Golgi intermediate compartment) and thereby secretion.

It localises to the secreted. Its subcellular location is the extracellular space. The protein localises to the extracellular matrix. The protein resides in the cytoplasm. Functionally, lectin that binds beta-galactoside and a wide array of complex carbohydrates. Plays a role in regulating apoptosis, cell proliferation and cell differentiation. Inhibits CD45 protein phosphatase activity and therefore the dephosphorylation of Lyn kinase. Strong inducer of T-cell apoptosis. This chain is Galectin-1 (LGALS1), found in Sus scrofa (Pig).